The sequence spans 554 residues: Cytochrome c oxidase subunit 1-alpha (554 aa).

A helical transmembrane segment spans residues 26-56 (KDIGVLYLFTAGLAGLISVTLTVYMRMELQH). An intrachain disulfide couples Cys63 to Cys77. 6 helical membrane-spanning segments follow: residues 81 to 118 (AHLWNVVVTYHGILMMFFVVIPALFGGFGNYFMPLHIG), 127 to 148 (LNNLSYWLYVCGVSLAIASLLS), 175 to 203 (AMDLAIFAVHVSGATSILGAINIITTFLN), 215 to 248 (PLFAWAVFITAWMILLSLPVLAGGITMLLMDRNF), 260 to 295 (DPVLYQHILWFFGHPEVYMLILPGFGIISHVISTFA), and 301 to 319 (GYLPMVLAMAAIAFLGFIV). His91 contacts Fe(II)-heme a. His273 and Tyr277 together coordinate Cu cation. Residues 273-277 (HPEVY) constitute a cross-link (1'-histidyl-3'-tyrosine (His-Tyr)). Residues His322 and His323 each contribute to the Cu cation site. Transmembrane regions (helical) follow at residues 331-359 (LTQQTYFQMATMTIAVPTGIKVFSWIATM), 367-390 (KTPMLWALAFLFTVGGVTGVVIAQ), 399-425 (DTYYIVAHFHYVMSLGALFAIFAGTYY), 436-463 (PEWAGQLHFWMMFIGSNLIFFPQHFLGR), and 478-508 (SYWNNISSIGAYISFASFLFFIGIVFYTLFA). His406 contacts heme a3. His408 lines the Fe(II)-heme a pocket.

The protein belongs to the heme-copper respiratory oxidase family. Requires Cu(2+) as cofactor. Heme is required as a cofactor.

The protein resides in the cell inner membrane. It carries out the reaction 4 Fe(II)-[cytochrome c] + O2 + 8 H(+)(in) = 4 Fe(III)-[cytochrome c] + 2 H2O + 4 H(+)(out). It participates in energy metabolism; oxidative phosphorylation. Its function is as follows. Subunit I and II form the functional core of the enzyme complex. Electrons originating in cytochrome c are transferred via heme a and Cu(A) to the binuclear center formed by heme a3 and Cu(B). This cytochrome c oxidase shows proton pump activity across the membrane in addition to the electron transfer. The protein is Cytochrome c oxidase subunit 1-alpha (ctaDI) of Paracoccus denitrificans.